The following is a 179-amino-acid chain: Cytochrome b6-f complex iron-sulfur subunit (179 aa).

A helical membrane pass occupies residues 21 to 43 (LLTFGTVTGVALGALYPVVNYFI). In terms of domain architecture, Rieske spans 61–162 (GNDIIVSEFL…ANVSDDKLVF (102 aa)). [2Fe-2S] cluster contacts are provided by C108, H110, C126, and H129. An intrachain disulfide couples C113 to C128.

It belongs to the Rieske iron-sulfur protein family. In terms of assembly, the 4 large subunits of the cytochrome b6-f complex are cytochrome b6, subunit IV (17 kDa polypeptide, PetD), cytochrome f and the Rieske protein, while the 4 small subunits are PetG, PetL, PetM and PetN. The complex functions as a dimer. Requires [2Fe-2S] cluster as cofactor.

It is found in the cellular thylakoid membrane. It catalyses the reaction 2 oxidized [plastocyanin] + a plastoquinol + 2 H(+)(in) = 2 reduced [plastocyanin] + a plastoquinone + 4 H(+)(out). In terms of biological role, component of the cytochrome b6-f complex, which mediates electron transfer between photosystem II (PSII) and photosystem I (PSI), cyclic electron flow around PSI, and state transitions. The protein is Cytochrome b6-f complex iron-sulfur subunit of Trichodesmium erythraeum (strain IMS101).